A 1849-amino-acid polypeptide reads, in one-letter code: Mitogen-activated protein kinase kinase kinase mkh1 (1849 aa).

One can recognise a Protein kinase domain in the interval 1556-1825 (WFKGQLIGKG…TKLLAEHPFC (270 aa)). ATP contacts are provided by residues 1562 to 1570 (IGKGTYGRV) and K1585. The active-site Proton acceptor is the D1686.

The protein belongs to the protein kinase superfamily. STE Ser/Thr protein kinase family. MAP kinase kinase kinase subfamily.

The enzyme catalyses L-seryl-[protein] + ATP = O-phospho-L-seryl-[protein] + ADP + H(+). The catalysed reaction is L-threonyl-[protein] + ATP = O-phospho-L-threonyl-[protein] + ADP + H(+). In terms of biological role, mitogen-activated protein kinase kinase kinase, part of the mkh1-mkk1-spm1 MAPK cascade that regulates vegetative growth, conidial formation, colony surface hydrophobicity, osmotic stress, cell wall integrity maintenance, carbon and nitrogen source utilization, chitin distribution, septa formation, and pathogenicity. This is Mitogen-activated protein kinase kinase kinase mkh1 from Cytospora mali (Apple Valsa canker fungus).